A 512-amino-acid chain; its full sequence is GMP synthase [glutamine-hydrolyzing] (512 aa).

The 191-residue stretch at 7–197 (TILILDFGGQ…LFEVCDCSAD (191 aa)) folds into the Glutamine amidotransferase type-1 domain. Cysteine 84 serves as the catalytic Nucleophile. Residues histidine 171 and glutamate 173 contribute to the active site. Positions 198 to 387 (WTMDSLIEQT…LGIPDEILYR (190 aa)) constitute a GMPS ATP-PPase domain. Residue 225–231 (SGGVDSA) coordinates ATP.

In terms of assembly, homodimer.

It carries out the reaction XMP + L-glutamine + ATP + H2O = GMP + L-glutamate + AMP + diphosphate + 2 H(+). Its pathway is purine metabolism; GMP biosynthesis; GMP from XMP (L-Gln route): step 1/1. In terms of biological role, catalyzes the synthesis of GMP from XMP. This Caldanaerobacter subterraneus subsp. tengcongensis (strain DSM 15242 / JCM 11007 / NBRC 100824 / MB4) (Thermoanaerobacter tengcongensis) protein is GMP synthase [glutamine-hydrolyzing].